The chain runs to 125 residues: Small ribosomal subunit protein bS6 (125 aa).

It belongs to the bacterial ribosomal protein bS6 family.

In terms of biological role, binds together with bS18 to 16S ribosomal RNA. The sequence is that of Small ribosomal subunit protein bS6 (rpsF) from Pasteurella multocida (strain Pm70).